The chain runs to 379 residues: Anhydro-N-acetylmuramic acid kinase (379 aa).

ATP is bound at residue 12–19; the sequence is GTSLDGMD.

The protein belongs to the anhydro-N-acetylmuramic acid kinase family.

The catalysed reaction is 1,6-anhydro-N-acetyl-beta-muramate + ATP + H2O = N-acetyl-D-muramate 6-phosphate + ADP + H(+). It functions in the pathway amino-sugar metabolism; 1,6-anhydro-N-acetylmuramate degradation. The protein operates within cell wall biogenesis; peptidoglycan recycling. Its function is as follows. Catalyzes the specific phosphorylation of 1,6-anhydro-N-acetylmuramic acid (anhMurNAc) with the simultaneous cleavage of the 1,6-anhydro ring, generating MurNAc-6-P. Is required for the utilization of anhMurNAc either imported from the medium or derived from its own cell wall murein, and thus plays a role in cell wall recycling. The sequence is that of Anhydro-N-acetylmuramic acid kinase from Gloeobacter violaceus (strain ATCC 29082 / PCC 7421).